Consider the following 265-residue polypeptide: 4-hydroxy-tetrahydrodipicolinate reductase (265 aa).

Residues 7-12 (GASGRM) and Asp-33 each bind NAD(+). Arg-34 lines the NADP(+) pocket. Residues 96–98 (GTT) and 120–123 (AANM) contribute to the NAD(+) site. Catalysis depends on His-153, which acts as the Proton donor/acceptor. His-154 lines the (S)-2,3,4,5-tetrahydrodipicolinate pocket. The active-site Proton donor is the Lys-157. A (S)-2,3,4,5-tetrahydrodipicolinate-binding site is contributed by 163-164 (GT).

Belongs to the DapB family.

It is found in the cytoplasm. It catalyses the reaction (S)-2,3,4,5-tetrahydrodipicolinate + NAD(+) + H2O = (2S,4S)-4-hydroxy-2,3,4,5-tetrahydrodipicolinate + NADH + H(+). The enzyme catalyses (S)-2,3,4,5-tetrahydrodipicolinate + NADP(+) + H2O = (2S,4S)-4-hydroxy-2,3,4,5-tetrahydrodipicolinate + NADPH + H(+). The protein operates within amino-acid biosynthesis; L-lysine biosynthesis via DAP pathway; (S)-tetrahydrodipicolinate from L-aspartate: step 4/4. Catalyzes the conversion of 4-hydroxy-tetrahydrodipicolinate (HTPA) to tetrahydrodipicolinate. This is 4-hydroxy-tetrahydrodipicolinate reductase from Burkholderia ambifaria (strain MC40-6).